The primary structure comprises 151 residues: Large ribosomal subunit protein bL9 (151 aa).

This sequence belongs to the bacterial ribosomal protein bL9 family.

In terms of biological role, binds to the 23S rRNA. This Francisella tularensis subsp. tularensis (strain FSC 198) protein is Large ribosomal subunit protein bL9.